A 60-amino-acid polypeptide reads, in one-letter code: Defensin-like protein 4 (60 aa).

4 disulfides stabilise this stretch: cysteine 4–cysteine 56, cysteine 17–cysteine 41, cysteine 26–cysteine 51, and cysteine 30–cysteine 53.

The protein belongs to the DEFL family. Protease inhibitor I18 (RTI/MTI-2) subfamily.

It is found in the secreted. Inhibits trypsin and chymotrypsin. The chain is Defensin-like protein 4 from Brassica napus (Rape).